A 329-amino-acid chain; its full sequence is Beta-tectorin (329 aa).

A signal peptide spans 1 to 17 (MVAVTVYLMVILAQAFA). One can recognise a ZP domain in the interval 19 to 287 (PCTPNKADVI…VTCDKRKQRM (269 aa)). Residues Asn-80, Asn-104, Asn-116, and Asn-145 are each glycosylated (N-linked (GlcNAc...) asparagine). A disulfide bridge connects residues Cys-204 and Cys-264. Gly-304 is lipidated: GPI-anchor amidated glycine. Positions 305–329 (LSRFYMLSDVIFHLLFAIGFCAILL) are cleaved as a propeptide — removed in mature form.

May form homomeric filament after self-association or heteromeric filament after association with alpha-tectorin. The N-terminus is blocked. Post-translationally, N-glycosylated. In terms of processing, the presence of a hydrophobic C-terminus preceded by a potential cleavage site strongly suggests that tectorins are synthesized as glycosylphosphatidylinositol-linked, membrane-bound precursors. Tectorins are targeted to the apical surface of the inner ear epithelia by the lipid and proteolytically released into the extracellular compartment. As to expression, exclusively expressed in the inner ear, where it is found in basilar papilla, clear cells, supporting cells, cuboidal cells and the lagena macula.

Its subcellular location is the cell membrane. The protein resides in the secreted. It is found in the extracellular space. The protein localises to the extracellular matrix. One of the major non-collagenous components of the tectorial membrane. The tectorial membrane is an extracellular matrix of the inner ear that covers the neuroepithelium of the cochlea and contacts the stereocilia bundles of specialized sensory hair cells. Sound induces movement of these hair cells relative to the tectorial membrane, deflects the stereocilia and leads to fluctuations in hair-cell membrane potential, transducing sound into electrical signals. This Gallus gallus (Chicken) protein is Beta-tectorin (TECTB).